The following is a 242-amino-acid chain: High mobility group protein homolog (242 aa).

2 DNA-binding regions (HMG box) span residues 54–122 (PKRN…EANK) and 126–197 (KPVK…IDKE).

The protein localises to the host nucleus. The chain is High mobility group protein homolog (EF1) from Acheta domesticus (House cricket).